Reading from the N-terminus, the 308-residue chain is Pantothenate kinase (308 aa).

Residue 93-100 (GSVAVGKS) coordinates ATP.

Belongs to the prokaryotic pantothenate kinase family.

It localises to the cytoplasm. The catalysed reaction is (R)-pantothenate + ATP = (R)-4'-phosphopantothenate + ADP + H(+). It functions in the pathway cofactor biosynthesis; coenzyme A biosynthesis; CoA from (R)-pantothenate: step 1/5. This is Pantothenate kinase from Corynebacterium diphtheriae (strain ATCC 700971 / NCTC 13129 / Biotype gravis).